We begin with the raw amino-acid sequence, 360 residues long: Putative F-box protein At1g65770 (360 aa).

The 49-residue stretch at 2-50 folds into the F-box domain; sequence ADWSTLPVDLLNMIAGRLFSNIELKRFRSICRSWRSSVPGAGKKNPFRT.

This Arabidopsis thaliana (Mouse-ear cress) protein is Putative F-box protein At1g65770.